Consider the following 82-residue polypeptide: uncharacterized protein (82 aa).

This is an uncharacterized protein from Sinorhizobium fredii (strain NBRC 101917 / NGR234).